Reading from the N-terminus, the 304-residue chain is MIYTMKKVHALWASVCLLLNLAPAPLNADSEEDEEHTIITDTELPPLKLMHSFCAFKADDGPCKAIMKRFFFNIFTRQCEEFIYGGCEGNQNRFESLEECKKMCTRDNANRIIKTTLQQEKPDFCFLEEDPGICRGYITRYFYNNQTKQCERFKYGGCLGNMNNFETLEECKNICEDGPNGFQVDNYGTQLNAVNNSLTPQSTKVPSLFEFHGPSWCLTPADRGLCRANENRFYYNSVIGKCRPFKYSGCGGNENNFTSKQECLRACKKGFIQRISKGGLIKTKRKRKKQRVKIAYEEIFVKNM.

A signal peptide spans 1 to 28 (MIYTMKKVHALWASVCLLLNLAPAPLNA). Residue Thr-42 is glycosylated (O-linked (GalNAc...) threonine; partial). BPTI/Kunitz inhibitor domains lie at 54–104 (CAFK…KKMC) and 125–175 (CFLE…KNIC). 6 disulfide bridges follow: Cys-54-Cys-104, Cys-63-Cys-87, Cys-79-Cys-100, Cys-125-Cys-175, Cys-134-Cys-158, and Cys-150-Cys-171. Asn-145 carries N-linked (GlcNAc...) asparagine glycosylation. The N-linked (GlcNAc...) asparagine glycan is linked to Asn-195. The O-linked (GalNAc...) serine; partial glycan is linked to Ser-202. Thr-203 carries O-linked (GalNAc...) threonine glycosylation. The BPTI/Kunitz inhibitor 3 domain occupies 217 to 267 (CLTPADRGLCRANENRFYYNSVIGKCRPFKYSGCGGNENNFTSKQECLRAC). Disulfide bonds link Cys-217/Cys-267, Cys-226/Cys-250, and Cys-242/Cys-263.

O-glycosylated. In terms of tissue distribution, mostly in endothelial cells.

It localises to the secreted. Its subcellular location is the microsome membrane. In terms of biological role, inhibits factor X (X(a)) directly and, in a Xa-dependent way, inhibits VIIa/tissue factor activity, presumably by forming a quaternary Xa/LACI/VIIa/TF complex. It possesses an antithrombotic action and also the ability to associate with lipoproteins in plasma. The chain is Tissue factor pathway inhibitor (TFPI) from Homo sapiens (Human).